Consider the following 79-residue polypeptide: Large ribosomal subunit protein bL31 (79 aa).

This sequence belongs to the bacterial ribosomal protein bL31 family. Type A subfamily. As to quaternary structure, part of the 50S ribosomal subunit.

In terms of biological role, binds the 23S rRNA. The protein is Large ribosomal subunit protein bL31 of Nostoc sp. (strain PCC 7120 / SAG 25.82 / UTEX 2576).